A 902-amino-acid polypeptide reads, in one-letter code: Cytosolic 10-formyltetrahydrofolate dehydrogenase (902 aa).

The interval 1–310 (MKIAVIGQSL…PASQYFKTAD (310 aa)) is hydrolase domain. 88–90 (QFI) is a (6R)-10-formyltetrahydrofolate binding site. Catalysis depends on His106, which acts as the Proton donor. Asp142 serves as a coordination point for (6R)-10-formyltetrahydrofolate. Residues 318 to 395 (EEEQKVSEEI…EFIQMVVRRM (78 aa)) enclose the Carrier domain. Position 354 is an O-(pantetheine 4'-phosphoryl)serine (Ser354). The tract at residues 417 to 902 (TVKIPHQLFI…LKTKAVTIEY (486 aa)) is aldehyde dehydrogenase domain. NADP(+) contacts are provided by residues 571–573 (IPW), 597–600 (KPAQ), 630–635 (GSLIGQ), 650–651 (GS), and 673–674 (EL). Glu673 acts as the Proton acceptor in catalysis. The active-site Proton donor is Cys707. NADP(+)-binding positions include Lys757 and 804–806 (ESF).

This sequence in the N-terminal section; belongs to the GART family. The protein in the C-terminal section; belongs to the aldehyde dehydrogenase family. ALDH1L subfamily. As to quaternary structure, homotetramer. In terms of processing, phosphopantetheinylation at Ser-354 by AASDHPPT is required for the formyltetrahydrofolate dehydrogenase activity.

The protein resides in the cytoplasm. It localises to the cytosol. It carries out the reaction (6R)-10-formyltetrahydrofolate + NADP(+) + H2O = (6S)-5,6,7,8-tetrahydrofolate + CO2 + NADPH + H(+). Its function is as follows. Cytosolic 10-formyltetrahydrofolate dehydrogenase that catalyzes the NADP(+)-dependent conversion of 10-formyltetrahydrofolate to tetrahydrofolate and carbon dioxide. May also have an NADP(+)-dependent aldehyde dehydrogenase activity towards formaldehyde, acetaldehyde, propionaldehyde, and benzaldehyde. The protein is Cytosolic 10-formyltetrahydrofolate dehydrogenase (aldh1l1) of Xenopus laevis (African clawed frog).